Consider the following 650-residue polypeptide: Threonine--tRNA ligase (650 aa).

One can recognise a TGS domain in the interval 1 to 66 (MVQITLPDGS…DQDAKLAIVT (66 aa)). The tract at residues 247–538 (DHRKIGRDLD…LIENHAGAMP (292 aa)) is catalytic. 3 residues coordinate Zn(2+): Cys338, His389, and His515.

Belongs to the class-II aminoacyl-tRNA synthetase family. In terms of assembly, homodimer. It depends on Zn(2+) as a cofactor.

It is found in the cytoplasm. The enzyme catalyses tRNA(Thr) + L-threonine + ATP = L-threonyl-tRNA(Thr) + AMP + diphosphate + H(+). Functionally, catalyzes the attachment of threonine to tRNA(Thr) in a two-step reaction: L-threonine is first activated by ATP to form Thr-AMP and then transferred to the acceptor end of tRNA(Thr). Also edits incorrectly charged L-seryl-tRNA(Thr). This Bordetella avium (strain 197N) protein is Threonine--tRNA ligase.